The chain runs to 281 residues: Elongation factor 1-delta (281 aa).

Ala2 is subject to N-acetylalanine. Lys17 carries the post-translational modification N6-acetyllysine. Residues Ser37, Glu40, Ser44, and Ser60 each carry the phosphoserine modification. Phosphothreonine is present on Thr73. The tract at residues 80–115 (LVVRIASLEVENQSLRGVVQELQQAISKLEARLNVL) is leucine-zipper. Phosphoserine is present on residues Ser86, Asn91, Leu94, and Ser106. Lys107 carries the N6-acetyllysine modification. Lys117 is modified (N6-acetyllysine; alternate). Lys117 carries the N6-succinyllysine; alternate modification. Positions 118 to 172 (SSPGHRATAPQTQHVSPMRQVEPPAKKPATPAEDDEDDDIDLFGSDNEEEDKEAA) are disordered. Ser119 is modified (phosphoserine). Phosphothreonine is present on Thr129. A Phosphoserine modification is found at Ser133. Thr147 is modified (phosphothreonine). Over residues 149 to 169 (AEDDEDDDIDLFGSDNEEEDK) the composition is skewed to acidic residues. Ser162 is subject to Phosphoserine; by CK2. Positions 173 to 281 (QLREERLRQY…SVDIAAFNKI (109 aa)) are catalytic (GEF).

This sequence belongs to the EF-1-beta/EF-1-delta family. As to quaternary structure, EF-1 is composed of 4 subunits: alpha, beta, delta isoform 1, and gamma. Isoform 2 interacts with HSF1 and NFE2L2. As to expression, isoform 2 is specifically expressed in brain, cerebellum and testis.

Its subcellular location is the nucleus. Its function is as follows. EF-1-beta and EF-1-delta stimulate the exchange of GDP bound to EF-1-alpha to GTP, regenerating EF-1-alpha for another round of transfer of aminoacyl-tRNAs to the ribosome. Functionally, regulates induction of heat-shock-responsive genes through association with heat shock transcription factors and direct DNA-binding at heat shock promoter elements (HSE). In Homo sapiens (Human), this protein is Elongation factor 1-delta (EEF1D).